The following is a 309-amino-acid chain: Protein MAK16 homolog (309 aa).

Residues Glu-194–Asn-309 form a disordered region. Composition is skewed to acidic residues over residues Ala-195–Asp-227 and Val-235–Glu-270. Over residues Ile-275–Arg-293 the composition is skewed to basic residues. Residues Glu-299–Asn-309 are compositionally biased toward acidic residues.

This sequence belongs to the MAK16 family.

It is found in the nucleus. The protein resides in the nucleolus. This Dictyostelium discoideum (Social amoeba) protein is Protein MAK16 homolog (mak16l).